Here is a 452-residue protein sequence, read N- to C-terminus: Probable 1,4-beta-D-glucan cellobiohydrolase A (452 aa).

An N-terminal signal peptide occupies residues 1-17 (MHQRALLFSALLTAVRA). The N-linked (GlcNAc...) asparagine glycan is linked to asparagine 62. The active-site Nucleophile is the glutamate 227. The active-site Proton donor is glutamate 232. N-linked (GlcNAc...) asparagine glycosylation is found at asparagine 285, asparagine 335, asparagine 402, and asparagine 445.

The protein belongs to the glycosyl hydrolase 7 (cellulase C) family.

It localises to the secreted. The catalysed reaction is Hydrolysis of (1-&gt;4)-beta-D-glucosidic linkages in cellulose and cellotetraose, releasing cellobiose from the non-reducing ends of the chains.. Functionally, the biological conversion of cellulose to glucose generally requires three types of hydrolytic enzymes: (1) Endoglucanases which cut internal beta-1,4-glucosidic bonds; (2) Exocellobiohydrolases that cut the disaccharide cellobiose from the non-reducing end of the cellulose polymer chain; (3) Beta-1,4-glucosidases which hydrolyze the cellobiose and other short cello-oligosaccharides to glucose. The polypeptide is Probable 1,4-beta-D-glucan cellobiohydrolase A (cbhA) (Aspergillus niger (strain ATCC MYA-4892 / CBS 513.88 / FGSC A1513)).